A 289-amino-acid chain; its full sequence is ATP synthase gamma chain (289 aa).

It belongs to the ATPase gamma chain family. In terms of assembly, F-type ATPases have 2 components, CF(1) - the catalytic core - and CF(0) - the membrane proton channel. CF(1) has five subunits: alpha(3), beta(3), gamma(1), delta(1), epsilon(1). CF(0) has three main subunits: a, b and c.

The protein resides in the cell inner membrane. In terms of biological role, produces ATP from ADP in the presence of a proton gradient across the membrane. The gamma chain is believed to be important in regulating ATPase activity and the flow of protons through the CF(0) complex. The sequence is that of ATP synthase gamma chain from Acinetobacter baumannii (strain AB307-0294).